A 189-amino-acid polypeptide reads, in one-letter code: Threonylcarbamoyl-AMP synthase (189 aa).

In terms of domain architecture, YrdC-like spans 7 to 189 (NFTVKGLTEQ…DAITGKIIRK (183 aa)).

It belongs to the SUA5 family. TsaC subfamily.

It is found in the cytoplasm. The catalysed reaction is L-threonine + hydrogencarbonate + ATP = L-threonylcarbamoyladenylate + diphosphate + H2O. Its function is as follows. Required for the formation of a threonylcarbamoyl group on adenosine at position 37 (t(6)A37) in tRNAs that read codons beginning with adenine. Catalyzes the conversion of L-threonine, HCO(3)(-)/CO(2) and ATP to give threonylcarbamoyl-AMP (TC-AMP) as the acyladenylate intermediate, with the release of diphosphate. The chain is Threonylcarbamoyl-AMP synthase from Blochmanniella floridana.